A 98-amino-acid chain; its full sequence is NADH-ubiquinone oxidoreductase chain 4L (98 aa).

3 consecutive transmembrane segments (helical) span residues Met-1–Thr-21, Ser-29–Leu-49, and Ile-58–Leu-78.

It belongs to the complex I subunit 4L family. As to quaternary structure, core subunit of respiratory chain NADH dehydrogenase (Complex I) which is composed of 45 different subunits.

The protein resides in the mitochondrion inner membrane. The catalysed reaction is a ubiquinone + NADH + 5 H(+)(in) = a ubiquinol + NAD(+) + 4 H(+)(out). Functionally, core subunit of the mitochondrial membrane respiratory chain NADH dehydrogenase (Complex I) which catalyzes electron transfer from NADH through the respiratory chain, using ubiquinone as an electron acceptor. Part of the enzyme membrane arm which is embedded in the lipid bilayer and involved in proton translocation. In Presbytis melalophos (Mitred leaf monkey), this protein is NADH-ubiquinone oxidoreductase chain 4L (MT-ND4L).